Reading from the N-terminus, the 492-residue chain is Prenylcysteine oxidase 1-like (492 aa).

A signal peptide spans 1–21; the sequence is MAHAARLLAALAALLAAAATG. Asn-340 is a glycosylation site (N-linked (GlcNAc...) asparagine).

Belongs to the prenylcysteine oxidase family. Requires FAD as cofactor.

The protein localises to the secreted. Functionally, likely to have oxidoreductase activity. Required in the mevalonate pathway to regulate prenylation and enhances the bactericidal activity of neutrophils. The sequence is that of Prenylcysteine oxidase 1-like (PCYOX1L) from Bos taurus (Bovine).